Reading from the N-terminus, the 512-residue chain is Annexin A7 (512 aa).

The segment covering 14–38 (GYPGGDPSYPPAAQQAFPGGQFPPA) has biased composition (low complexity). 2 disordered regions span residues 14 to 62 (GYPG…GYPH) and 146 to 190 (GGFS…AQPT). Residues 39–52 (AGGGAFPPASGGGN) are compositionally biased toward gly residues. A compositionally biased stretch (low complexity) spans 164–182 (MPGQMPGQMPGQAPSGYPS). Annexin repeat units follow at residues 209-279 (FDAL…ALFM), 280-351 (PSTY…SIMA), 364-436 (QQAE…AVLQ), and 440-511 (NRPL…AISG).

The protein belongs to the annexin family.

Its function is as follows. Calcium/phospholipid-binding protein which promotes membrane fusion and is involved in exocytosis. The sequence is that of Annexin A7 (anxa7) from Xenopus laevis (African clawed frog).